A 114-amino-acid chain; its full sequence is Large ribosomal subunit protein bL19 (114 aa).

The protein belongs to the bacterial ribosomal protein bL19 family.

Functionally, this protein is located at the 30S-50S ribosomal subunit interface and may play a role in the structure and function of the aminoacyl-tRNA binding site. The protein is Large ribosomal subunit protein bL19 of Bacillus mycoides (strain KBAB4) (Bacillus weihenstephanensis).